The primary structure comprises 470 residues: Calcitonin gene-related peptide type 1 receptor (470 aa).

A signal peptide spans 1-23; it reads MTASCWTICLFLLGSVTEFIVLA. Topologically, residues 24-147 are extracellular; sequence SPEVNESQQQ…HTTEGRRTAM (124 aa). N-linked (GlcNAc...) asparagine glycosylation is found at asparagine 28, asparagine 74, asparagine 126, and asparagine 131. 3 cysteine pairs are disulfide-bonded: cysteine 56–cysteine 82, cysteine 73–cysteine 113, and cysteine 96–cysteine 135. A helical membrane pass occupies residues 148–172; it reads NLFYLALIGHGLSLTSLFISLGIFF. Topologically, residues 173–183 are cytoplasmic; sequence HFKSLSCQRIT. A helical membrane pass occupies residues 184–206; that stretch reads LHKNLFFSFVLNSIITIIWLTAV. Residues 207–217 lie on the Extracellular side of the membrane; that stretch reads ANNQELVQQNP. Residues 218–246 form a helical membrane-spanning segment; that stretch reads ISCKISQFIHLYIFGCNYFWMLCEGIYLH. Residues 247–260 are Cytoplasmic-facing; it reads TLIVVAVFAEKQHL. A helical membrane pass occupies residues 261-281; sequence MWYYLLGWGFPLIPATIHAVA. Over 282 to 297 the chain is Extracellular; that stretch reads RSYYYNDNCWISSNTS. Asparagine 295 is a glycosylation site (N-linked (GlcNAc...) asparagine). The chain crosses the membrane as a helical span at residues 298 to 322; it reads LLYIIHGPICAAMLVNLFFLLNIVR. The Cytoplasmic portion of the chain corresponds to 323–337; the sequence is VLITKLKVTHQAKSS. A helical membrane pass occupies residues 338 to 359; the sequence is LYMKAVRATLILVPLLGIQYVL. Topologically, residues 360–374 are extracellular; it reads LPYKPSGRVSAEIYD. Residues 375-395 form a helical membrane-spanning segment; that stretch reads YIMHILMHYQGLLVATIFCFF. Over 396–470 the chain is Cytoplasmic; that stretch reads NGEVQAVLRR…AIIKPENPFA (75 aa).

Belongs to the G-protein coupled receptor 2 family.

The protein localises to the cell membrane. May function as G protein-coupled receptor for calcitonin-gene-related peptides and adrenomedullin. Specificity may be modulated by accessory proteins. May activate cAMP-dependent pathway. The sequence is that of Calcitonin gene-related peptide type 1 receptor (calcrla) from Danio rerio (Zebrafish).